A 238-amino-acid polypeptide reads, in one-letter code: Ribonuclease 3 (238 aa).

The region spanning 11–136 (RARLEAAIGY…LIAAIYLDGG (126 aa)) is the RNase III domain. A Mg(2+)-binding site is contributed by Glu49. Asp53 is an active-site residue. Asp122 and Glu125 together coordinate Mg(2+). Glu125 is a catalytic residue. A DRBM domain is found at 161 to 230 (DAKTELQEWA…AMKLLEREGV (70 aa)). The segment covering 180–193 (YRTEDRSGPDHDPR) has biased composition (basic and acidic residues). The interval 180 to 215 (YRTEDRSGPDHDPRFTVTVEVDGIDPETGVDRSKRG) is disordered.

This sequence belongs to the ribonuclease III family. Homodimer. Mg(2+) serves as cofactor.

It localises to the cytoplasm. The catalysed reaction is Endonucleolytic cleavage to 5'-phosphomonoester.. Its function is as follows. Digests double-stranded RNA. Involved in the processing of primary rRNA transcript to yield the immediate precursors to the large and small rRNAs (23S and 16S). Processes some mRNAs, and tRNAs when they are encoded in the rRNA operon. Processes pre-crRNA and tracrRNA of type II CRISPR loci if present in the organism. The protein is Ribonuclease 3 of Sinorhizobium medicae (strain WSM419) (Ensifer medicae).